A 471-amino-acid chain; its full sequence is Cysteine--tRNA ligase (471 aa).

C29 contributes to the Zn(2+) binding site. The 'HIGH' region motif lies at P31 to N41. Zn(2+)-binding residues include C209, H234, and E238. The short motif at K266–S270 is the 'KMSKS' region element. K269 is an ATP binding site.

This sequence belongs to the class-I aminoacyl-tRNA synthetase family. As to quaternary structure, monomer. Requires Zn(2+) as cofactor.

The protein localises to the cytoplasm. It carries out the reaction tRNA(Cys) + L-cysteine + ATP = L-cysteinyl-tRNA(Cys) + AMP + diphosphate. In Listeria welshimeri serovar 6b (strain ATCC 35897 / DSM 20650 / CCUG 15529 / CIP 8149 / NCTC 11857 / SLCC 5334 / V8), this protein is Cysteine--tRNA ligase.